The sequence spans 244 residues: Small ribosomal subunit protein uS3 (244 aa).

Residues 38-106 (IRKYLNARLA…EVQINIFEVK (69 aa)) form the KH type-2 domain. Residues 222–235 (TGRRNDNAGGNRDK) show a composition bias toward basic and acidic residues. Positions 222 to 244 (TGRRNDNAGGNRDKNFKRKRANR) are disordered.

Belongs to the universal ribosomal protein uS3 family. Part of the 30S ribosomal subunit. Forms a tight complex with proteins S10 and S14.

In terms of biological role, binds the lower part of the 30S subunit head. Binds mRNA in the 70S ribosome, positioning it for translation. The polypeptide is Small ribosomal subunit protein uS3 (Parabacteroides distasonis (strain ATCC 8503 / DSM 20701 / CIP 104284 / JCM 5825 / NCTC 11152)).